A 194-amino-acid chain; its full sequence is Fibroblast growth factor 7 (194 aa).

The N-terminal stretch at 1 to 31 (MHKWILTWILPTLLYRSCFHIICLVGTISLA) is a signal peptide. Asn45 carries N-linked (GlcNAc...) asparagine glycosylation.

It belongs to the heparin-binding growth factors family. Interacts with FGFBP1. Interacts with FGFR2. Affinity between fibroblast growth factors (FGFs) and their receptors is increased by heparan sulfate glycosaminoglycans that function as coreceptors. Epithelial cell.

The protein resides in the secreted. Plays an important role in the regulation of embryonic development, cell proliferation and cell differentiation. Required for normal branching morphogenesis. Growth factor active on keratinocytes. Possible major paracrine effector of normal epithelial cell proliferation. This is Fibroblast growth factor 7 (FGF7) from Homo sapiens (Human).